The chain runs to 357 residues: Ferrochelatase (357 aa).

The Fe cation site is built by His193 and Glu272.

This sequence belongs to the ferrochelatase family.

The protein resides in the cytoplasm. The enzyme catalyses heme b + 2 H(+) = protoporphyrin IX + Fe(2+). It participates in porphyrin-containing compound metabolism; protoheme biosynthesis; protoheme from protoporphyrin-IX: step 1/1. Its function is as follows. Catalyzes the ferrous insertion into protoporphyrin IX. This chain is Ferrochelatase, found in Hyphomonas neptunium (strain ATCC 15444).